The chain runs to 958 residues: MNWMPALSLALLWTAWLVCGSEKTGRLAERGSHGVRKVPQSHRAPSSLLRRSGASLKNLSPSPQHPVTKRDSSVPPKAPANLLKEESRSQPRSVGTRTRRLQRLTAAAKYSKSEMIKDEGISTASQSRAVRFPSGSSSPNVLASFAGKNRVWVISAPHASEGYYRLMMSLLKNDVYCELAERHIQQIVLFHEEGEEGGKVRRITNEGKILEQPLDPALIPKLMSFLKLEKGKFGMVLLKKTLQVEERYPYPVRLEAMYEVIDQNPIRKIEKMRQKGFIQTCKAAGVEGQVVEDDNNGGSTQSIPGGGHVQVSAGGRKEEPRRSSNQPTRTKTVRKPMTTTVATPLPTVRTTTLPTTTTATRATTRTVTTASRPTTTTTPLPTTQRTWTTKSHTTTEYHRLPASPEVTTPRVMASEDFYSPVWKANRRDRQRGHPEKHLAATRKPSKGGRYESFTEVPTAPSVHYTKASMSRFKDNRTDRKDYNHRDLNVTPGQHKPTKTKPPKKKTQEKILSNEYEDKYDPSKPASPHLEEEIAVGSIPPKKGKESKKHERMDKPEKKKKKDRPDKLHKSEKQSKKDKAEKKSKQDKDRSKKNKKGSRTENEDFPKPNKKPFLQPPRKSVANLLDYFEGKRRLILITTPKADNTMYVQQRDEYLESFCKMATRKISVITIFGTMNNSSMKIDHFQLDNEKPMKVIEDEDLVDQQLISELRKEYGMTYNDFFMVLTDTDMKVKQYYEVPIAMKSVFDLIDTFQSRIKDMERQKKEGIVCKEDKKQSLESFLSRFRWRRRLVVISAPSDEDWAYSQQLAALSGQACNFGLRHITILKLLGVGEDIGGVLELYPINGSATVDREDIPANLVKDIRNYFQISPEYFSMLLVGKDGNVKSWYPSPMWSMAIVYDLIDSMQLRRQEMTIQQSLGMQCPEDEYGGYGYHSYHQGYQEGYQDDYRHHGSYHHGYPY.

The signal sequence occupies residues 1-21; it reads MNWMPALSLALLWTAWLVCGS. 5 disordered regions span residues 30-99, 290-335, 358-396, 424-452, and 467-617; these read RGSH…TRTR, VVED…TVRK, TATR…TTTE, ANRR…RYES, and ASMS…QPPR. Residues 358 to 389 are compositionally biased toward low complexity; sequence TATRATTRTVTTASRPTTTTTPLPTTQRTWTT. 2 stretches are compositionally biased toward basic and acidic residues: residues 425-438 and 471-487; these read NRRD…EKHL and RFKD…HRDL. Over residues 495 to 506 the composition is skewed to basic residues; the sequence is KPTKTKPPKKKT. Basic and acidic residues-rich tracts occupy residues 547–589 and 597–606; these read KKHE…DKDR and SRTENEDFPK.

The protein belongs to the CCDC80 family. In terms of assembly, binds to various extracellular matrix proteins.

It is found in the secreted. The protein localises to the extracellular space. The protein resides in the extracellular matrix. Its function is as follows. Promotes cell adhesion and matrix assembly. May play a role in eye formation. This chain is Coiled-coil domain-containing protein 80 (CCDC80), found in Gallus gallus (Chicken).